Here is a 439-residue protein sequence, read N- to C-terminus: Mitochondrial distribution and morphology protein 10 (439 aa).

Positions 275–305 (LPDATPPSFQVPSSSSSSSNPVSPSTSQPPT) are disordered. Residues 280 to 305 (PPSFQVPSSSSSSSNPVSPSTSQPPT) show a composition bias toward low complexity.

The protein belongs to the MDM10 family. Component of the ER-mitochondria encounter structure (ERMES) or MDM complex, composed of MMM1, MDM10, MDM12 and MDM34. Associates with the mitochondrial outer membrane sorting assembly machinery SAM(core) complex.

The protein resides in the mitochondrion outer membrane. Component of the ERMES/MDM complex, which serves as a molecular tether to connect the endoplasmic reticulum and mitochondria. Components of this complex are involved in the control of mitochondrial shape and protein biogenesis and may function in phospholipid exchange. MDM10 is involved in the late assembly steps of the general translocase of the mitochondrial outer membrane (TOM complex). Functions in the TOM40-specific route of the assembly of outer membrane beta-barrel proteins, including the association of TOM40 with the receptor TOM22 and small TOM proteins. Can associate with the SAM(core) complex as well as the MDM12-MMM1 complex, both involved in late steps of the major beta-barrel assembly pathway, that is responsible for biogenesis of all outer membrane beta-barrel proteins. May act as a switch that shuttles between both complexes and channels precursor proteins into the TOM40-specific pathway. Plays a role in mitochondrial morphology and in the inheritance of mitochondria. In Laccaria bicolor (strain S238N-H82 / ATCC MYA-4686) (Bicoloured deceiver), this protein is Mitochondrial distribution and morphology protein 10.